The sequence spans 157 residues: Small heat shock protein ibp (157 aa).

The region spanning 35 to 148 (EKPISDTPTY…KPKKISINVP (114 aa)) is the sHSP domain.

It belongs to the small heat shock protein (HSP20) family.

This Buchnera aphidicola subsp. Acyrthosiphon pisum (strain APS) (Acyrthosiphon pisum symbiotic bacterium) protein is Small heat shock protein ibp (ibp).